Here is a 99-residue protein sequence, read N- to C-terminus: uncharacterized protein (99 aa).

The interval 50-77 is disordered; sequence SAHWEDARSSGGTSPIRARAGSEGRGCQ.

This is an uncharacterized protein from Homo sapiens (Human).